Here is a 689-residue protein sequence, read N- to C-terminus: Glycine--tRNA ligase beta subunit (689 aa).

This sequence belongs to the class-II aminoacyl-tRNA synthetase family. Tetramer of two alpha and two beta subunits.

Its subcellular location is the cytoplasm. The catalysed reaction is tRNA(Gly) + glycine + ATP = glycyl-tRNA(Gly) + AMP + diphosphate. This chain is Glycine--tRNA ligase beta subunit, found in Klebsiella pneumoniae (strain 342).